Here is a 1357-residue protein sequence, read N- to C-terminus: DNA-directed RNA polymerase subunit beta (1357 aa).

It belongs to the RNA polymerase beta chain family. As to quaternary structure, the RNAP catalytic core consists of 2 alpha, 1 beta, 1 beta' and 1 omega subunit. When a sigma factor is associated with the core the holoenzyme is formed, which can initiate transcription.

The enzyme catalyses RNA(n) + a ribonucleoside 5'-triphosphate = RNA(n+1) + diphosphate. Its function is as follows. DNA-dependent RNA polymerase catalyzes the transcription of DNA into RNA using the four ribonucleoside triphosphates as substrates. The polypeptide is DNA-directed RNA polymerase subunit beta (Pseudomonas aeruginosa (strain LESB58)).